Reading from the N-terminus, the 638-residue chain is Voltage-gated potassium channel KCNC2 (638 aa).

At 1–229 the chain is on the cytoplasmic side; it reads MGKIENNERV…EDPYSSRAAR (229 aa). The segment at 47–75 is disordered; it reads LTAAGDKLQPLPPPLSPPPRPPPLSPVPS. Pro residues predominate over residues 56–72; sequence PLPPPLSPPPRPPPLSP. Histidine 124, cysteine 130, cysteine 151, and cysteine 152 together coordinate Zn(2+). Residues 230–248 traverse the membrane as a helical segment; sequence FIAFASLFFILVSITTFCL. 2 N-linked (GlcNAc...) asparagine glycosylation sites follow: asparagine 259 and asparagine 266. The chain crosses the membrane as a helical span at residues 284–303; sequence YVEGVCVVWFTFEFLVRIVF. Residues 304–314 lie on the Cytoplasmic side of the membrane; the sequence is SPNKLEFIKNL. Residues 315-337 form a helical membrane-spanning segment; the sequence is LNIIDFVAILPFYLEVGLSGLSS. Residues 346-368 form a helical; Voltage-sensor membrane-spanning segment; the sequence is FLRVVRFVRILRIFKLTRHFVGL. The Cytoplasmic segment spans residues 369-381; that stretch reads RVLGHTLRASTNE. A helical transmembrane segment spans residues 382–401; it reads FLLLIIFLALGVLIFATMIY. K(+) is bound by residues threonine 437, leucine 438, glycine 439, and tyrosine 440. The short motif at 437–442 is the Selectivity filter element; that stretch reads TLGYGD. A helical transmembrane segment spans residues 451–473; the sequence is MLVGALCALAGVLTIAMPVPVIV. The Cytoplasmic segment spans residues 474–638; the sequence is NNFGMYYSLA…RSRSPIPSIL (165 aa). Residues 538 to 572 form a disordered region; that stretch reads SVLSGDDSTGSEPPLSPPERLPIRRSSTRDKNRRG. Serine 564 is subject to Phosphoserine; by PKA. Residue serine 600 is modified to Phosphoserine.

It belongs to the potassium channel family. C (Shaw) (TC 1.A.1.2) subfamily. Kv3.2/KCNC2 sub-subfamily. As to quaternary structure, homotetramer and heterotetramer with other channel-forming alpha subunits, such as KCNC1. Interacts with KCNC1. Homotetramer or heterotetramer channel activity is regulated by association with modulating ancillary subunits such as KCNE1, KCNE2 and KCNE3, creating a functionally diverse range of channel complexes. Interacts with KCNE1, KCNE2 and KCNE3. Post-translationally, phosphorylated by PKA in cortical synaptosomes. cAMP-dependent phosphorylation inhibits channel activity. Histamine H2 receptor- and PKA-induced phosphorylation extends action potential spike duration, reduces action potential spike amplitude, sustains maximum firing frequency in hippocampal interneurons; also reduces the incidence of high-frequency oscillations in hippocampal CA3 pyramidal cell layers. Expressed in neurons of the visual cortex during postnatal development. Expressed in neurons of the globus pallidus at postnatal age day 7 (P7), onward. Expressed in thalamic relay neurons. Expressed in neurons in layer IV and deeper cortical layers of the neocortex. Expressed in hippocampal interneurons. Expressed in nonpyramidal interneurons in the basolateral amygdala. Expressed in retinal ganglion cells (at protein level). Widely expressed in the brain. Expressed in numerous thalamic relay neurons throughout the dorsal thalamus. Expressed in interneurons of the deep layers V-VI of the cerebral cortex, the CA1 and CA3 pyramidal and dentate gyrus (DG) granule cells of the hippocampus, in neurons of the caudate-putamen, globus pallidus and subthalamic nucleus. Also expressed in the optic layer of interior colliculus, the inferior colliculus, the red nucleus, the medial geniculate, the ventral lateral lemiscus, the reticulotegmental nucleus and in the deep cerebellar nuclei. Expressed in globus pallidus (GP) neurons.

Its subcellular location is the cell membrane. It is found in the membrane. It localises to the perikaryon. The protein localises to the cell projection. The protein resides in the axon. Its subcellular location is the synapse. It is found in the synaptosome. It localises to the dendrite. The protein localises to the postsynaptic cell membrane. The protein resides in the presynaptic cell membrane. Its subcellular location is the apical cell membrane. It is found in the basolateral cell membrane. The catalysed reaction is K(+)(in) = K(+)(out). Its activity is regulated as follows. Inhibited by Stichodactyla helianthus peptide ShK. Inhibited by millimolar levels of tetraethylammonium (TEA). Contrary to other channels, inhibited only by millimolar levels of 4-aminopyridine (4-AP). Functionally, voltage-gated potassium channel that mediates transmembrane potassium transport in excitable membranes, primarily in the brain. Contributes to the regulation of the fast action potential repolarization and in sustained high-frequency firing in neurons of the central nervous system. Homotetramer channels mediate delayed-rectifier voltage-dependent potassium currents that activate rapidly at high-threshold voltages and inactivate slowly. Forms tetrameric channels through which potassium ions pass in accordance with their electrochemical gradient. The channel alternates between opened and closed conformations in response to the voltage difference across the membrane. Can form functional homotetrameric channels and heterotetrameric channels that contain variable proportions of KCNC1, and possibly other family members as well; channel properties depend on the type of alpha subunits that are part of the channel. Channel properties may be modulated either by the association with ancillary subunits, such as KCNE1, KCNE2 and KCNE3 or indirectly by nitric oxide (NO) through a cGMP- and PKG-mediated signaling cascade, slowing channel activation and deactivation of delayed rectifier potassium channels. Contributes to fire sustained trains of very brief action potentials at high frequency in retinal ganglion cells, thalamocortical and suprachiasmatic nucleus (SCN) neurons and in hippocampal and neocortical interneurons. Sustained maximal action potential firing frequency in inhibitory hippocampal interneurons is negatively modulated by histamine H2 receptor activation in a cAMP- and protein kinase (PKA) phosphorylation-dependent manner. Plays a role in maintaining the fidelity of synaptic transmission in neocortical GABAergic interneurons by generating action potential (AP) repolarization at nerve terminals, thus reducing spike-evoked calcium influx and GABA neurotransmitter release. Required for long-range synchronization of gamma oscillations over distance in the neocortex. Contributes to the modulation of the circadian rhythm of spontaneous action potential firing in suprachiasmatic nucleus (SCN) neurons in a light-dependent manner. In Rattus norvegicus (Rat), this protein is Voltage-gated potassium channel KCNC2.